We begin with the raw amino-acid sequence, 189 residues long: UPF0149 protein VSAL_I2539 (189 aa).

The protein belongs to the UPF0149 family.

In Aliivibrio salmonicida (strain LFI1238) (Vibrio salmonicida (strain LFI1238)), this protein is UPF0149 protein VSAL_I2539.